The following is a 346-amino-acid chain: Elongation factor Ts (346 aa).

Positions Thr80–Val83 are involved in Mg(2+) ion dislocation from EF-Tu.

This sequence belongs to the EF-Ts family.

The protein localises to the cytoplasm. Associates with the EF-Tu.GDP complex and induces the exchange of GDP to GTP. It remains bound to the aminoacyl-tRNA.EF-Tu.GTP complex up to the GTP hydrolysis stage on the ribosome. This is Elongation factor Ts from Streptococcus pyogenes serotype M18 (strain MGAS8232).